The primary structure comprises 244 residues: Type I iodothyronine deiodinase (244 aa).

At 1 to 12 (MGLSQLGLWLRR) the chain is on the extracellular side. A helical; Signal-anchor for type III membrane protein membrane pass occupies residues 13 to 33 (LWVLFQVALQVAVGKVFLILF). Topologically, residues 34–244 (PSRVKQHIVA…VRAVLEKLHS (211 aa)) are cytoplasmic. The active site involves U121. U121 is a non-standard amino acid (selenocysteine).

This sequence belongs to the iodothyronine deiodinase family. As to quaternary structure, predominantly monomer. Can form homodimers but homodimerization is not essential for enzyme activity.

It is found in the cell membrane. The protein localises to the endoplasmic reticulum membrane. Its subcellular location is the basolateral cell membrane. It catalyses the reaction 3,3',5-triiodo-L-thyronine + iodide + A + H(+) = L-thyroxine + AH2. It carries out the reaction 3,3',5'-triiodo-L-thyronine + iodide + A + H(+) = L-thyroxine + AH2. The enzyme catalyses 3,3'-diiodo-L-thyronine + iodide + A + H(+) = 3,3',5'-triiodo-L-thyronine + AH2. The catalysed reaction is 3,3'-diiodo-L-thyronine + iodide + A + H(+) = 3,3',5-triiodo-L-thyronine + AH2. It catalyses the reaction 3'-iodo-L-thyronine + iodide + A + H(+) = 3',5'-diiodo-L-thyronine + AH2. It carries out the reaction 3-iodo-L-thyronine + iodide + A + H(+) = 3,5-diiodo-L-thyronine + AH2. The enzyme catalyses 3-iodo-L-thyronine + iodide + A + H(+) = 3,3'-diiodo-L-thyronine + AH2. The catalysed reaction is 3,3'-diiodothyronamine + iodide + A + H(+) = 3,3',5'-triiodothyronamine + AH2. It catalyses the reaction 3'-iodothyronamine + iodide + A + H(+) = 3',5'-diiodothyronamine + AH2. It carries out the reaction 3-iodothyronamine + iodide + A + H(+) = 3,3'-diiodothyronamine + AH2. The enzyme catalyses 3,3'-diiodothyronamine + iodide + A + H(+) = 3,3',5-triiodothyronamine + AH2. The catalysed reaction is 3-iodothyronamine + iodide + A + H(+) = 3,5-diiodothyronamine + AH2. It catalyses the reaction 3,3'-diiodo-L-thyronine sulfate + iodide + A + H(+) = 3,3',5'-triiodo-L-thyronine sulfate + AH2. It carries out the reaction 3,3',5'-triiodo-L-thyronine sulfate + iodide + A + H(+) = L-thyroxine sulfate + AH2. The enzyme catalyses 3,3'-diiodo-L-thyronine sulfate + iodide + A + H(+) = 3,3',5-triiodo-L-thyronine sulfate + AH2. Functionally, plays a crucial role in the metabolism of thyroid hormones (TH) and has specific roles in TH activation and inactivation by deiodination. Catalyzes the deiodination of L-thyroxine (T4) to 3,5,3'-triiodothyronine (T3) and 3',5'-diiodothyronine (3',5'-T2) to 3'-monoiodothyronine (3'-T1) via outer-ring deiodination (ORD). Catalyzes the deiodination of T4 to 3,3',5'-triiodothyronine (rT3), T3 to 3,3'-diiodothyronine (3,3'-T2), 3,5-diiodothyronine (3,5-T2) to 3-monoiodothyronine (3-T1) and 3,3'-T2 to 3-T1 via inner-ring deiodination (IRD). Catalyzes the deiodination of rT3 to 3,3'-T2 via ORD. Catalyzes the phenolic ring deiodinations of 3,3',5'-triiodothyronamine, 3',5'-diiodothyronamine and 3,3'-diiodothyronamine as well as tyrosyl ring deiodinations of 3,5,3'-triiodothyronamine and 3,5-diiodothyronamine. Catalyzes the deiodination of L-thyroxine sulfate and 3,3',5-triiodo-L-thyronine sulfate via IRD and of 3,3',5'-triiodo-L-thyronine sulfate via ORD. This Felis catus (Cat) protein is Type I iodothyronine deiodinase (DIO1).